Reading from the N-terminus, the 308-residue chain is 26S proteasome non-ATPase regulatory subunit 14 homolog (308 aa).

One can recognise an MPN domain in the interval 30 to 165 (VYISSLALLK…IDAFRSINPQ (136 aa)). Zn(2+) contacts are provided by histidine 112, histidine 114, and aspartate 125. The JAMM motif signature appears at 112–125 (HSHPGFGCWLSGVD). Residue lysine 238 forms a Glycyl lysine isopeptide (Lys-Gly) (interchain with G-Cter in ubiquitin) linkage.

It belongs to the peptidase M67A family. PSMD14 subfamily. As to quaternary structure, component of the 19S regulatory particle (RP/PA700) lid subcomplex of the 26S proteasome. The 26S proteasome is composed of a core protease (CP), known as the 20S proteasome, capped at one or both ends by the 19S regulatory particle (RP/PA700). The RP/PA700 complex is composed of at least 17 different subunits in two subcomplexes, the base and the lid, which form the portions proximal and distal to the 20S proteolytic core, respectively. As to expression, ubiquitous with highest expression in flowers.

Metalloprotease component of the 26S proteasome that specifically cleaves 'Lys-63'-linked polyubiquitin chains. The 26S proteasome is involved in the ATP-dependent degradation of ubiquitinated proteins. The function of the 'Lys-63'-specific deubiquitination of the proteasome is unclear. The polypeptide is 26S proteasome non-ATPase regulatory subunit 14 homolog (RPN11) (Arabidopsis thaliana (Mouse-ear cress)).